The chain runs to 505 residues: ATP synthase subunit beta (505 aa).

157–164 contributes to the ATP binding site; sequence GGAGVGKT.

This sequence belongs to the ATPase alpha/beta chains family. F-type ATPases have 2 components, CF(1) - the catalytic core - and CF(0) - the membrane proton channel. CF(1) has five subunits: alpha(3), beta(3), gamma(1), delta(1), epsilon(1). CF(0) has three main subunits: a(1), b(2) and c(9-12). The alpha and beta chains form an alternating ring which encloses part of the gamma chain. CF(1) is attached to CF(0) by a central stalk formed by the gamma and epsilon chains, while a peripheral stalk is formed by the delta and b chains.

Its subcellular location is the cell inner membrane. It catalyses the reaction ATP + H2O + 4 H(+)(in) = ADP + phosphate + 5 H(+)(out). Produces ATP from ADP in the presence of a proton gradient across the membrane. The catalytic sites are hosted primarily by the beta subunits. This Bacteroides fragilis (strain ATCC 25285 / DSM 2151 / CCUG 4856 / JCM 11019 / LMG 10263 / NCTC 9343 / Onslow / VPI 2553 / EN-2) protein is ATP synthase subunit beta.